A 530-amino-acid polypeptide reads, in one-letter code: Protein SLOW WALKER 1 (530 aa).

7 WD repeats span residues 50–89 (NLVS…SSRR), 91–130 (SFRD…ALRT), 133–173 (SHSA…VISD), 176–216 (GHKD…SNWI), 220–258 (NHGL…KMVC), 262–304 (SHNK…VTYS), and 320–363 (GSTR…DESR). The Nuclear localization signal signature appears at 392 to 399 (EKKGLKLT).

In terms of tissue distribution, expressed in cells undergoing active cell divisions, including functional megaspores and the female gametophytic cells. Accumulates in roots, stems, leaves, inflorescences and siliques.

The protein resides in the nucleus. The protein localises to the nucleolus. In terms of biological role, essential protein required for nuclear division and organization during embryo sac development in female gametophyte, probably by promoting rRNA biogenesis essential for the progression of the mitotic division cycles during gametogenesis. Involved in nucleolar processing of pre-18S ribosomal RNA. The protein is Protein SLOW WALKER 1 of Arabidopsis thaliana (Mouse-ear cress).